The chain runs to 393 residues: Stearoyl-[acyl-carrier-protein] 9-desaturase, chloroplastic (393 aa).

A chloroplast-targeting transit peptide spans 1-30 (MALNINGVSLKSHKMLPFPCSSARSERVFM). The Fe cation site is built by glutamate 135, glutamate 173, histidine 176, glutamate 259, and histidine 262.

The protein belongs to the fatty acid desaturase type 2 family. Homodimer. Fe(2+) serves as cofactor.

Its subcellular location is the plastid. The protein localises to the chloroplast. The catalysed reaction is octadecanoyl-[ACP] + 2 reduced [2Fe-2S]-[ferredoxin] + O2 + 2 H(+) = (9Z)-octadecenoyl-[ACP] + 2 oxidized [2Fe-2S]-[ferredoxin] + 2 H2O. It participates in lipid metabolism; fatty acid metabolism. Converts stearoyl-ACP to oleoyl-ACP by introduction of a cis double bond between carbons 9 and 10 of the acyl chain. The chain is Stearoyl-[acyl-carrier-protein] 9-desaturase, chloroplastic from Solanum tuberosum (Potato).